The following is a 325-amino-acid chain: Small ribosomal subunit protein RACK1 (325 aa).

7 WD repeats span residues 5–48 (QMKL…WDVD), 58–99 (IGRP…WDLN), 100–141 (QGVS…WNTL), 143–186 (QCKY…WNLG), 187–227 (NCRL…LWDL), 228–268 (NEGK…WDLE), and 269–320 (DKKE…YQVS).

The protein belongs to the WD repeat G protein beta family. Ribosomal protein RACK1 subfamily.

Functionally, required for the expression of antimicrobial peptide nlp-29 in response to fungal infection or physical injury. In Caenorhabditis elegans, this protein is Small ribosomal subunit protein RACK1 (rack-1).